The primary structure comprises 182 residues: Large ribosomal subunit protein bL25 (182 aa).

This sequence belongs to the bacterial ribosomal protein bL25 family. CTC subfamily. As to quaternary structure, part of the 50S ribosomal subunit; part of the 5S rRNA/L5/L18/L25 subcomplex. Contacts the 5S rRNA. Binds to the 5S rRNA independently of L5 and L18.

In terms of biological role, this is one of the proteins that binds to the 5S RNA in the ribosome where it forms part of the central protuberance. This chain is Large ribosomal subunit protein bL25, found in Borreliella afzelii (strain PKo) (Borrelia afzelii).